A 156-amino-acid polypeptide reads, in one-letter code: Small ribosomal subunit protein uS7 (156 aa).

Belongs to the universal ribosomal protein uS7 family. In terms of assembly, part of the 30S ribosomal subunit. Contacts proteins S9 and S11.

In terms of biological role, one of the primary rRNA binding proteins, it binds directly to 16S rRNA where it nucleates assembly of the head domain of the 30S subunit. Is located at the subunit interface close to the decoding center, probably blocks exit of the E-site tRNA. In Pseudomonas entomophila (strain L48), this protein is Small ribosomal subunit protein uS7.